Reading from the N-terminus, the 298-residue chain is tRNA pseudouridine synthase B (298 aa).

D46 acts as the Nucleophile in catalysis.

It belongs to the pseudouridine synthase TruB family. Type 1 subfamily.

It carries out the reaction uridine(55) in tRNA = pseudouridine(55) in tRNA. In terms of biological role, responsible for synthesis of pseudouridine from uracil-55 in the psi GC loop of transfer RNAs. The polypeptide is tRNA pseudouridine synthase B (Paracoccus denitrificans (strain Pd 1222)).